We begin with the raw amino-acid sequence, 1588 residues long: Pentafunctional AROM polypeptide (1588 aa).

Positions 1–392 are 3-dehydroquinate synthase; sequence MVQLAKVPIL…YGDSAQFVSD (392 aa). NAD(+)-binding positions include 43 to 45, 78 to 81, 109 to 111, and D114; these read DTN, ETSK, and GGV. R125 contributes to the 7-phospho-2-dehydro-3-deoxy-D-arabino-heptonate binding site. NAD(+) is bound at residue 134-135; it reads TS. 7-phospho-2-dehydro-3-deoxy-D-arabino-heptonate is bound by residues D141 and K147. Residue K156 coordinates NAD(+). N157 is a 7-phospho-2-dehydro-3-deoxy-D-arabino-heptonate binding site. NAD(+) is bound by residues 174-177 and N185; that span reads WLET. E189 contacts Zn(2+). Residues 189 to 192 and K258 each bind 7-phospho-2-dehydro-3-deoxy-D-arabino-heptonate; that span reads EVIK. E268 acts as the Proton acceptor; for 3-dehydroquinate synthase activity in catalysis. Residues 272 to 276 and H279 contribute to the 7-phospho-2-dehydro-3-deoxy-D-arabino-heptonate site; that span reads RNLLN. H279 provides a ligand contact to Zn(2+). Catalysis depends on H283, which acts as the Proton acceptor; for 3-dehydroquinate synthase activity. 2 residues coordinate 7-phospho-2-dehydro-3-deoxy-D-arabino-heptonate: H295 and K364. H295 lines the Zn(2+) pocket. Residues 405 to 871 form an EPSP synthase region; the sequence is VYPFKDIPAD…WDVLHSELGA (467 aa). C853 functions as the For EPSP synthase activity in the catalytic mechanism. The shikimate kinase stretch occupies residues 890–1080; sequence SVVIIGMRAA…IPSGRSAFVC (191 aa). 895-902 serves as a coordination point for ATP; sequence GMRAAGKT. Residues 1081–1293 form a 3-dehydroquinase region; it reads LTFDDLTEQT…AAPGQLTVAQ (213 aa). Catalysis depends on H1198, which acts as the Proton acceptor; for 3-dehydroquinate dehydratase activity. K1227 functions as the Schiff-base intermediate with substrate; for 3-dehydroquinate dehydratase activity in the catalytic mechanism. The tract at residues 1306–1588 is shikimate dehydrogenase; it reads PKELFVVGKP…KAIFDAVTKE (283 aa).

This sequence in the N-terminal section; belongs to the sugar phosphate cyclases superfamily. Dehydroquinate synthase family. It in the 2nd section; belongs to the EPSP synthase family. The protein in the 3rd section; belongs to the shikimate kinase family. In the 4th section; belongs to the type-I 3-dehydroquinase family. This sequence in the C-terminal section; belongs to the shikimate dehydrogenase family. Homodimer. Zn(2+) is required as a cofactor.

The protein resides in the cytoplasm. It catalyses the reaction 7-phospho-2-dehydro-3-deoxy-D-arabino-heptonate = 3-dehydroquinate + phosphate. The catalysed reaction is 3-dehydroquinate = 3-dehydroshikimate + H2O. It carries out the reaction shikimate + NADP(+) = 3-dehydroshikimate + NADPH + H(+). The enzyme catalyses shikimate + ATP = 3-phosphoshikimate + ADP + H(+). It catalyses the reaction 3-phosphoshikimate + phosphoenolpyruvate = 5-O-(1-carboxyvinyl)-3-phosphoshikimate + phosphate. The protein operates within metabolic intermediate biosynthesis; chorismate biosynthesis; chorismate from D-erythrose 4-phosphate and phosphoenolpyruvate: step 2/7. It participates in metabolic intermediate biosynthesis; chorismate biosynthesis; chorismate from D-erythrose 4-phosphate and phosphoenolpyruvate: step 3/7. Its pathway is metabolic intermediate biosynthesis; chorismate biosynthesis; chorismate from D-erythrose 4-phosphate and phosphoenolpyruvate: step 4/7. It functions in the pathway metabolic intermediate biosynthesis; chorismate biosynthesis; chorismate from D-erythrose 4-phosphate and phosphoenolpyruvate: step 5/7. The protein operates within metabolic intermediate biosynthesis; chorismate biosynthesis; chorismate from D-erythrose 4-phosphate and phosphoenolpyruvate: step 6/7. Functionally, the AROM polypeptide catalyzes 5 consecutive enzymatic reactions in prechorismate polyaromatic amino acid biosynthesis. The sequence is that of Pentafunctional AROM polypeptide from Saccharomyces cerevisiae (strain RM11-1a) (Baker's yeast).